A 244-amino-acid chain; its full sequence is Ethylene-responsive transcription factor 1 (244 aa).

Residues histidine 106 to proline 164 constitute a DNA-binding region (AP2/ERF). The span at serine 186–glycine 198 shows a compositional bias: low complexity. Positions serine 186–leucine 214 are disordered.

Belongs to the ethylene-response factor family. Class 1 subfamily. Present in stems.

It is found in the nucleus. Its function is as follows. Involved in the regulation of gene expression during fruit ripening, by stress factors and by components of stress signal transduction pathways. Transcription factor that binds to the GCC-box pathogenesis-related promoter element. Probably acts as a transcriptional activator and may be involved in disease resistance pathways. The chain is Ethylene-responsive transcription factor 1 (ERF1) from Solanum lycopersicum (Tomato).